Consider the following 199-residue polypeptide: MTRLEEIPSGSRVAGVDEVGRGCLFGPVFAAAVVLDEVAEQRLWQAGLTDSKKLSAKRRAGLVPLIEQHCLTRGLGQASAHEIDAVGIRGATERAMLRALQKLAHPPNVVLVDGNLPLRLWSGSQQTVVGGDSRSAAIAAASVLAKEARDALIRRLSDQFPGYGLERHAGYGTALHQKALLALGPTSLHRRSFLRRLLG.

Positions 11 to 199 constitute an RNase H type-2 domain; that stretch reads SRVAGVDEVG…RRSFLRRLLG (189 aa). 3 residues coordinate a divalent metal cation: Asp-17, Glu-18, and Asp-113.

It belongs to the RNase HII family. The cofactor is Mn(2+). Requires Mg(2+) as cofactor.

The protein resides in the cytoplasm. The enzyme catalyses Endonucleolytic cleavage to 5'-phosphomonoester.. Functionally, endonuclease that specifically degrades the RNA of RNA-DNA hybrids. This chain is Ribonuclease HII, found in Synechococcus sp. (strain CC9902).